The following is a 491-amino-acid chain: GTPase Der (491 aa).

EngA-type G domains lie at 3–166 and 200–373; these read PVVA…AEAM and IKLA…DSAT. GTP contacts are provided by residues 9 to 16, 56 to 60, 118 to 121, 206 to 213, 253 to 257, and 318 to 321; these read GRPNVGKS, DTGGI, NKVD, GKPNVGKS, DTAGV, and NKWD. A KH-like domain is found at 374–458; that stretch reads RRVSTSMLTR…PIQIRFQEGD (85 aa). The interval 472–491 is disordered; that stretch reads QERRRKRALSHINDRKTKGE.

Belongs to the TRAFAC class TrmE-Era-EngA-EngB-Septin-like GTPase superfamily. EngA (Der) GTPase family. Associates with the 50S ribosomal subunit.

In terms of biological role, GTPase that plays an essential role in the late steps of ribosome biogenesis. The protein is GTPase Der of Shewanella denitrificans (strain OS217 / ATCC BAA-1090 / DSM 15013).